A 347-amino-acid polypeptide reads, in one-letter code: Guanine nucleotide-binding protein subunit beta (347 aa).

WD repeat units follow at residues 60 to 90 (GHLA…LVWD), 102 to 132 (LRSS…SIYN), 148 to 177 (SHTG…ILWD), 189 to 219 (DHNG…KLWD), 231 to 261 (GHEA…RLFD), 275 to 305 (NILC…NVWD), and 317 to 347 (GHGN…KIWA).

Belongs to the WD repeat G protein beta family. As to quaternary structure, g proteins are composed of 3 units, alpha, beta and gamma. Interacts with gpgA, and this requires phlp1.

Its subcellular location is the cytoplasm. It is found in the cell membrane. Functionally, guanine nucleotide-binding proteins (G proteins) are involved as a modulator or transducer in various transmembrane signaling systems. The beta and gamma chains are required for the GTPase activity, for replacement of GDP by GTP, and for G protein-effector interaction. Required for normal chemotaxis in response to cAMP and for aggregation during scorocarp development. This chain is Guanine nucleotide-binding protein subunit beta (gpbA), found in Dictyostelium discoideum (Social amoeba).